Reading from the N-terminus, the 539-residue chain is Glucose-6-phosphate isomerase (539 aa).

Catalysis depends on Glu340, which acts as the Proton donor. Active-site residues include His371 and Lys500.

Belongs to the GPI family.

The protein resides in the cytoplasm. It catalyses the reaction alpha-D-glucose 6-phosphate = beta-D-fructose 6-phosphate. It functions in the pathway carbohydrate biosynthesis; gluconeogenesis. The protein operates within carbohydrate degradation; glycolysis; D-glyceraldehyde 3-phosphate and glycerone phosphate from D-glucose: step 2/4. Its function is as follows. Catalyzes the reversible isomerization of glucose-6-phosphate to fructose-6-phosphate. This chain is Glucose-6-phosphate isomerase, found in Ruegeria pomeroyi (strain ATCC 700808 / DSM 15171 / DSS-3) (Silicibacter pomeroyi).